The chain runs to 179 residues: MNQEVIAKRYASALFQIALEQGQLDRIEEDVRAVRQALAENGEFLSLLSYPKLSLDQKKALIREAFAGVSTPVQNTLLLLLERHRFGLVPELAGTVSRPRSTTARGIAKAVAYSGAASTDEELRALSDVFAQKVGKQTLEIENIIDPELIGGVNVRIGNRIYDGSVSGQLERIRRQLIG.

This sequence belongs to the ATPase delta chain family. F-type ATPases have 2 components, F(1) - the catalytic core - and F(0) - the membrane proton channel. F(1) has five subunits: alpha(3), beta(3), gamma(1), delta(1), epsilon(1). F(0) has three main subunits: a(1), b(2) and c(10-14). The alpha and beta chains form an alternating ring which encloses part of the gamma chain. F(1) is attached to F(0) by a central stalk formed by the gamma and epsilon chains, while a peripheral stalk is formed by the delta and b chains.

It is found in the cell membrane. In terms of biological role, f(1)F(0) ATP synthase produces ATP from ADP in the presence of a proton or sodium gradient. F-type ATPases consist of two structural domains, F(1) containing the extramembraneous catalytic core and F(0) containing the membrane proton channel, linked together by a central stalk and a peripheral stalk. During catalysis, ATP synthesis in the catalytic domain of F(1) is coupled via a rotary mechanism of the central stalk subunits to proton translocation. Functionally, this protein is part of the stalk that links CF(0) to CF(1). It either transmits conformational changes from CF(0) to CF(1) or is implicated in proton conduction. This is ATP synthase subunit delta from Bacillus sp. (strain PS3).